The sequence spans 193 residues: Probable GTP-binding protein EngB (193 aa).

In terms of domain architecture, EngB-type G spans 22–193; it reads ALPEFALAGR…EAWAALERFL (172 aa). GTP-binding positions include 30–37, 57–61, 75–78, 142–145, and 174–176; these read GRSNVGKS, GKTQT, DVPG, TKAD, and FSA. Serine 37 and threonine 59 together coordinate Mg(2+).

Belongs to the TRAFAC class TrmE-Era-EngA-EngB-Septin-like GTPase superfamily. EngB GTPase family. The cofactor is Mg(2+).

Necessary for normal cell division and for the maintenance of normal septation. The protein is Probable GTP-binding protein EngB of Geobacillus sp. (strain WCH70).